Consider the following 154-residue polypeptide: Large ribosomal subunit protein uL13 (154 aa).

Belongs to the universal ribosomal protein uL13 family. Part of the 50S ribosomal subunit.

This protein is one of the early assembly proteins of the 50S ribosomal subunit, although it is not seen to bind rRNA by itself. It is important during the early stages of 50S assembly. The chain is Large ribosomal subunit protein uL13 from Rhizobium johnstonii (strain DSM 114642 / LMG 32736 / 3841) (Rhizobium leguminosarum bv. viciae).